The chain runs to 117 residues: Small ribosomal subunit protein bS6 (117 aa).

The protein belongs to the bacterial ribosomal protein bS6 family.

In terms of biological role, binds together with bS18 to 16S ribosomal RNA. In Trichodesmium erythraeum (strain IMS101), this protein is Small ribosomal subunit protein bS6.